The sequence spans 976 residues: Leucine--tRNA ligase (976 aa).

Residues 63 to 74 (PYPSGVGLHVGH) carry the 'HIGH' region motif. The 'KMSKS' region signature appears at 745-749 (KMGKS). Residue Lys748 participates in ATP binding.

This sequence belongs to the class-I aminoacyl-tRNA synthetase family.

The protein localises to the cytoplasm. The catalysed reaction is tRNA(Leu) + L-leucine + ATP = L-leucyl-tRNA(Leu) + AMP + diphosphate. The polypeptide is Leucine--tRNA ligase (Corynebacterium jeikeium (strain K411)).